The following is a 296-amino-acid chain: Putative ankyrin repeat protein FPV216 (296 aa).

ANK repeat units follow at residues 73–102 and 107–136; these read SYVN…DVNT and LVIT…NINI.

The sequence is that of Putative ankyrin repeat protein FPV216 from Fowlpox virus (strain NVSL) (FPV).